The sequence spans 297 residues: NADH-ubiquinone oxidoreductase chain 1 (297 aa).

Transmembrane regions (helical) follow at residues 1–21, 34–54, 66–86, 99–119, 139–159, 170–190, 206–228, 235–257, and 277–297; these read MKSL…TLAE, PNHV…KLIL, WLFV…WLVI, LSIL…IYTG, VSYE…GATL, GTVL…AALA, LVAG…GEYA, TVLN…IWIR, and LPFL…LDLF.

Belongs to the complex I subunit 1 family.

The protein resides in the mitochondrion inner membrane. It catalyses the reaction a ubiquinone + NADH + 5 H(+)(in) = a ubiquinol + NAD(+) + 4 H(+)(out). In terms of biological role, core subunit of the mitochondrial membrane respiratory chain NADH dehydrogenase (Complex I) that is believed to belong to the minimal assembly required for catalysis. Complex I functions in the transfer of electrons from NADH to the respiratory chain. The immediate electron acceptor for the enzyme is believed to be ubiquinone. The chain is NADH-ubiquinone oxidoreductase chain 1 from Hyaloraphidium curvatum (Lower fungus).